The primary structure comprises 208 residues: Guanylate kinase (208 aa).

A Guanylate kinase-like domain is found at 4–185 (GNLYILSAPS…TLKDLQSILQ (182 aa)). 11 to 18 (APSGAGKS) contacts ATP.

The protein belongs to the guanylate kinase family.

It localises to the cytoplasm. The catalysed reaction is GMP + ATP = GDP + ADP. In terms of biological role, essential for recycling GMP and indirectly, cGMP. The chain is Guanylate kinase from Haemophilus influenzae (strain 86-028NP).